Consider the following 101-residue polypeptide: uncharacterized protein (101 aa).

This is an uncharacterized protein from Neurospora crassa (strain ATCC 24698 / 74-OR23-1A / CBS 708.71 / DSM 1257 / FGSC 987).